The following is a 1235-amino-acid chain: ATP-dependent DNA helicase mph1 (1235 aa).

Disordered stretches follow at residues 20–78 (LTQA…YRIH) and 96–148 (DEMP…VHSP). Positions 61-72 (SRSDNDEADEKK) are enriched in basic and acidic residues. Over residues 137-148 (AKTQKQNIVHSP) the composition is skewed to polar residues. Residues 272–440 (IVHKGLFNNL…EVIDNLEIAE (169 aa)) enclose the Helicase ATP-binding domain. Residue 285–292 (LPTGLGKT) participates in ATP binding. The DEAH box signature appears at 388-391 (DEAH). The 177-residue stretch at 608–784 (KLTYLCDTVL…GSRFTFRHDL (177 aa)) folds into the Helicase C-terminal domain. Disordered stretches follow at residues 808 to 827 (NTQD…RKKL), 944 to 1117 (SRLQ…PPLM), and 1144 to 1235 (TGAK…DSDE). Residues 947–958 (QRPEDRDNKPYG) are compositionally biased toward basic and acidic residues. The segment covering 1015–1027 (VAPKKAKPRRGRA) has biased composition (basic residues). A compositionally biased stretch (basic and acidic residues) spans 1065 to 1074 (PGERVDRTSD). Residues 1075-1085 (MEELEADDDSD) are compositionally biased toward acidic residues. 2 stretches are compositionally biased toward polar residues: residues 1095-1114 (PTQT…SSSP) and 1146-1159 (AKNS…MTQE). The span at 1160-1170 (SSDGGDSMDSD) shows a compositional bias: low complexity. A compositionally biased stretch (polar residues) spans 1194-1209 (PSSSVFSSGQKATPNM).

It belongs to the DEAD box helicase family. DEAH subfamily. FANCM sub-subfamily. In terms of assembly, interacts with the MHF histone-fold complex to form the FANCM-MHF complex.

It localises to the nucleus. The catalysed reaction is ATP + H2O = ADP + phosphate + H(+). In terms of biological role, ATP-dependent DNA helicase involved in DNA damage repair by homologous recombination and in genome maintenance. Capable of unwinding D-loops. Plays a role in limiting crossover recombinants during mitotic DNA double-strand break (DSB) repair. Component of a FANCM-MHF complex which promotes gene conversion at blocked replication forks, probably by reversal of the stalled fork. In Sclerotinia sclerotiorum (strain ATCC 18683 / 1980 / Ss-1) (White mold), this protein is ATP-dependent DNA helicase mph1.